A 20-amino-acid polypeptide reads, in one-letter code: Citrate synthase (20 aa).

The protein belongs to the citrate synthase family. In terms of assembly, homohexamer.

The catalysed reaction is oxaloacetate + acetyl-CoA + H2O = citrate + CoA + H(+). The protein operates within carbohydrate metabolism; tricarboxylic acid cycle; isocitrate from oxaloacetate: step 1/2. With respect to regulation, allosterically inhibited by NADH. The chain is Citrate synthase (gltA) from Streptomyces hygroscopicus.